A 411-amino-acid polypeptide reads, in one-letter code: Copper resistance protein CRF1 (411 aa).

A DNA-binding region (copper-fist) is located at residues 1–40 (MVVIEGIKYACERCIRGHRVSSCTHTQQPLIRIKPKGRPA). Zn(2+) is bound by residues C11, C14, C23, and H25. 4 stretches are compositionally biased toward low complexity: residues 115-190 (QQQA…PHSP), 205-214 (SSSSLSSLHS), 227-241 (SHNSLSAASQLANSP), and 350-370 (SVAANPSASASASSIQTPPSS). Disordered stretches follow at residues 115–241 (QQQA…ANSP) and 348–389 (EMSV…VSPA).

The protein localises to the nucleus. Its function is as follows. Transcriptional regulator involved in resistance to high copper concentration. This is Copper resistance protein CRF1 (CRF1) from Yarrowia lipolytica (strain CLIB 122 / E 150) (Yeast).